A 388-amino-acid polypeptide reads, in one-letter code: Mitochondrial distribution and morphology protein 12 (388 aa).

The 388-residue stretch at 1 to 388 folds into the SMP-LTD domain; that stretch reads MSLDINWSLL…VFPNFHTVAL (388 aa). Disordered stretches follow at residues 75–101 and 209–249; these read DDEG…RNEA and PMSI…KVSS. The segment covering 83–101 has biased composition (basic and acidic residues); the sequence is EEKQREKEREERDKLRNEA. Positions 234-243 are enriched in pro residues; that stretch reads PSPPAHPAGL.

Belongs to the MDM12 family. Component of the ER-mitochondria encounter structure (ERMES) or MDM complex, composed of MMM1, MDM10, MDM12 and MDM34. An MMM1 homodimer associates with one molecule of MDM12 on each side in a pairwise head-to-tail manner, and the SMP-LTD domains of MMM1 and MDM12 generate a continuous hydrophobic tunnel for phospholipid trafficking.

It is found in the mitochondrion outer membrane. The protein resides in the endoplasmic reticulum membrane. Component of the ERMES/MDM complex, which serves as a molecular tether to connect the endoplasmic reticulum (ER) and mitochondria. Components of this complex are involved in the control of mitochondrial shape and protein biogenesis, and function in nonvesicular lipid trafficking between the ER and mitochondria. MDM12 is required for the interaction of the ER-resident membrane protein MMM1 and the outer mitochondrial membrane-resident beta-barrel protein MDM10. The MDM12-MMM1 subcomplex functions in the major beta-barrel assembly pathway that is responsible for biogenesis of all mitochondrial outer membrane beta-barrel proteins, and acts in a late step after the SAM complex. The MDM10-MDM12-MMM1 subcomplex further acts in the TOM40-specific pathway after the action of the MDM12-MMM1 complex. Essential for establishing and maintaining the structure of mitochondria and maintenance of mtDNA nucleoids. This is Mitochondrial distribution and morphology protein 12 from Cryptococcus neoformans var. neoformans serotype D (strain JEC21 / ATCC MYA-565) (Filobasidiella neoformans).